The primary structure comprises 444 residues: Methylenetetrahydrofolate--tRNA-(uracil-5-)-methyltransferase TrmFO (444 aa).

10–15 (GAGLAG) provides a ligand contact to FAD.

This sequence belongs to the MnmG family. TrmFO subfamily. FAD serves as cofactor.

It localises to the cytoplasm. The catalysed reaction is uridine(54) in tRNA + (6R)-5,10-methylene-5,6,7,8-tetrahydrofolate + NADH + H(+) = 5-methyluridine(54) in tRNA + (6S)-5,6,7,8-tetrahydrofolate + NAD(+). The enzyme catalyses uridine(54) in tRNA + (6R)-5,10-methylene-5,6,7,8-tetrahydrofolate + NADPH + H(+) = 5-methyluridine(54) in tRNA + (6S)-5,6,7,8-tetrahydrofolate + NADP(+). Its function is as follows. Catalyzes the folate-dependent formation of 5-methyl-uridine at position 54 (M-5-U54) in all tRNAs. This is Methylenetetrahydrofolate--tRNA-(uracil-5-)-methyltransferase TrmFO from Streptococcus sanguinis (strain SK36).